The primary structure comprises 871 residues: Speckle targeted PIP5K1A-regulated poly(A) polymerase (871 aa).

The segment at 16–46 (FRCCLCHITTANQPSLDAHLGGRKHRHLVEL) adopts a Matrin-type zinc-finger fold. One can recognise an RRM domain in the interval 56–128 (RSVFVSGFPR…RRLRVRPREQ (73 aa)). S205 provides a ligand contact to ATP. D216 and D218 together coordinate Mg(2+). Residues D216 and D218 each contribute to the UTP site. The tract at residues 252–321 (QALACTPASP…QEDQGDGDQG (70 aa)) is disordered. The span at 259-269 (ASPPDSQPPAS) shows a compositional bias: pro residues. N392 is a binding site for ATP. Residues N392, R414, Y432, and H547 each contribute to the UTP site. The region spanning 489–547 (LSSLLAQFFSCVSCWDLRGSLLSLREGQALSVAGGLPSNLSEGLRLGPMNLQDPFDLSH) is the PAP-associated domain. The segment at 596–871 (SSPSSILSAT…LPQALRNLLK (276 aa)) is KA1; binds the bulging loops of U6 snRNA but is dispensable for terminal uridylyltransferase activity. A disordered region spans residues 636-684 (GTKRLRSEGGGPGEPPQGGTSKRAKLDGQKKSCEEGPEEQQGCAGEHGE). The segment covering 659–669 (AKLDGQKKSCE) has biased composition (basic and acidic residues). At S748 the chain carries Phosphoserine.

The protein belongs to the DNA polymerase type-B-like family. As to quaternary structure, associates with the cleavage and polyadenylation specificity factor (CPSF) complex. Interacts with CPSF1 and CPSF3; the interaction is direct. Interacts with PIP5K1A. The cofactor is Mg(2+). Mn(2+) serves as cofactor. Phosphorylated by CK1 in the proline-rich (Pro-rich) region.

It localises to the nucleus. The protein resides in the nucleolus. It is found in the nucleus speckle. The enzyme catalyses RNA(n) + UTP = RNA(n)-3'-uridine ribonucleotide + diphosphate. It carries out the reaction RNA(n) + ATP = RNA(n)-3'-adenine ribonucleotide + diphosphate. Adenylyltransferase activity is specifically phosphatidylinositol 4,5-bisphosphate (PtdIns(4,5)P2). In terms of biological role, poly(A) polymerase that creates the 3'-poly(A) tail of specific pre-mRNAs. Localizes to nuclear speckles together with PIP5K1A and mediates polyadenylation of a select set of mRNAs, such as HMOX1. In addition to polyadenylation, it is also required for the 3'-end cleavage of pre-mRNAs: binds to the 3'UTR of targeted pre-mRNAs and promotes the recruitment and assembly of the CPSF complex on the 3'UTR of pre-mRNAs. In addition to adenylyltransferase activity, also has uridylyltransferase activity. However, the ATP ratio is higher than UTP in cells, suggesting that it functions primarily as a poly(A) polymerase. Acts as a specific terminal uridylyltransferase for U6 snRNA in vitro: responsible for a controlled elongation reaction that results in the restoration of the four 3'-terminal UMP-residues found in newly transcribed U6 snRNA. Not involved in replication-dependent histone mRNA degradation. The polypeptide is Speckle targeted PIP5K1A-regulated poly(A) polymerase (TUT1) (Bos taurus (Bovine)).